The primary structure comprises 274 residues: Penicillin-insensitive murein endopeptidase (274 aa).

The signal sequence occupies residues 1-19 (MNKTAIALLALLASSASLA). 3 disulfide bridges follow: Cys44-Cys265, Cys187-Cys235, and Cys216-Cys223. Zn(2+)-binding residues include His110, His113, Asp120, Asp147, His150, and His211. The disordered stretch occupies residues 228–274 (LPPSGDGCGAELQSWFEPPKPGTTKPEKKTPPPLPPSCQALLDEHVI).

Belongs to the peptidase M74 family. In terms of assembly, dimer. Zn(2+) is required as a cofactor.

It is found in the periplasm. With respect to regulation, inhibited by Zn(2+) at 10 mM and by metal chelating agents EDTA and 1,10-phenanthroline. Functionally, murein endopeptidase that cleaves the D-alanyl-meso-2,6-diamino-pimelyl amide bond that connects peptidoglycan strands. Likely plays a role in the removal of murein from the sacculus and could also play a role in the integration of nascent murein strands into the sacculus. The sequence is that of Penicillin-insensitive murein endopeptidase (mepA) from Escherichia coli (strain K12).